The primary structure comprises 750 residues: Neprilysin (750 aa).

Residue Gly-2 is the site of N-myristoyl glycine attachment. Topologically, residues 2–28 are cytoplasmic; sequence GRSESQMDITDINAPKPKKKQRWTPLE. Ser-4 and Ser-6 each carry phosphoserine. The short motif at 16–23 is the Stop-transfer sequence element; the sequence is PKPKKKQR. The chain crosses the membrane as a helical; Signal-anchor for type II membrane protein span at residues 29–51; that stretch reads ISLSVLVLLLTIIAVTMIALYAT. Residues 52–750 are Extracellular-facing; that stretch reads YDDGICKSSD…MNPERKCRVW (699 aa). In terms of domain architecture, Peptidase M13 spans 56 to 750; it reads ICKSSDCIKS…MNPERKCRVW (695 aa). 6 disulfide bridges follow: Cys-57–Cys-62, Cys-80–Cys-735, Cys-88–Cys-695, Cys-143–Cys-411, Cys-234–Cys-242, and Cys-621–Cys-747. A peptide is bound at residue Arg-103. N-linked (GlcNAc...) asparagine glycosylation is found at Asn-145 and Asn-211. N-linked (GlcNAc...) asparagine glycosylation is found at Asn-285, Asn-311, and Asn-325. Residue His-584 coordinates Zn(2+). Glu-585 is a catalytic residue. Zn(2+) is bound at residue His-588. An N-linked (GlcNAc...) asparagine glycan is attached at Asn-628. Glu-647 contacts Zn(2+). Catalysis depends on Asp-651, which acts as the Proton donor.

Belongs to the peptidase M13 family. Zn(2+) serves as cofactor. In terms of processing, myristoylation is a determinant of membrane targeting. Glycosylation at Asn-628 is necessary both for surface expression and neutral endopeptidase activity.

The protein localises to the cell membrane. It catalyses the reaction Preferential cleavage of polypeptides between hydrophobic residues, particularly with Phe or Tyr at P1'.. It carries out the reaction substance P + H2O = substance P(1-9) + L-Leu-L-Met-NH2. The catalysed reaction is substance P + H2O = substance P(1-7) + L-Phe-Gly-L-Leu-L-Met-NH2. The enzyme catalyses neurotensin + H2O = neurotensin(1-11) + L-isoleucyl-L-leucine. It catalyses the reaction neurotensin + H2O = neurotensin(1-10) + L-tyrosyl-L-isoleucyl-L-leucine. In terms of biological role, thermolysin-like specificity, but is almost confined on acting on polypeptides of up to 30 amino acids. Biologically important in the destruction of opioid peptides such as Met- and Leu-enkephalins by cleavage of a Gly-Phe bond. Catalyzes cleavage of bradykinin, substance P and neurotensin peptides. Able to cleave angiotensin-1, angiotensin-2 and angiotensin 1-9. Involved in the degradation of the atrial natriuretic factor (ANF). Displays UV-inducible elastase activity toward skin preelastic and elastic fibers. The sequence is that of Neprilysin from Mus musculus (Mouse).